A 197-amino-acid chain; its full sequence is Nucleoid occlusion factor SlmA (197 aa).

The HTH tetR-type domain maps to 7 to 67 (INRREHILQC…GLIEFIEESL (61 aa)). Residues 30 to 49 (TTAKLASEVGVSEAALYRHF) constitute a DNA-binding region (H-T-H motif).

This sequence belongs to the nucleoid occlusion factor SlmA family. Homodimer. Interacts with FtsZ.

The protein localises to the cytoplasm. It is found in the nucleoid. Functionally, required for nucleoid occlusion (NO) phenomenon, which prevents Z-ring formation and cell division over the nucleoid. Acts as a DNA-associated cell division inhibitor that binds simultaneously chromosomal DNA and FtsZ, and disrupts the assembly of FtsZ polymers. SlmA-DNA-binding sequences (SBS) are dispersed on non-Ter regions of the chromosome, preventing FtsZ polymerization at these regions. This is Nucleoid occlusion factor SlmA from Shewanella oneidensis (strain ATCC 700550 / JCM 31522 / CIP 106686 / LMG 19005 / NCIMB 14063 / MR-1).